A 346-amino-acid polypeptide reads, in one-letter code: Peripherin-2 (346 aa).

Over 1-24 (MALLKVKFDQKKRVKLAQGLWLMN) the chain is Cytoplasmic. A helical transmembrane segment spans residues 25–43 (WLSVLAGIVLFSLGLFLKI). Topologically, residues 44 to 61 (ELRKRSEVMNNSESHFVP) are lumenal. The N-linked (GlcNAc...) asparagine glycan is linked to Asn53. A helical transmembrane segment spans residues 62-80 (NSLIGVGVLSCVFNSLAGK). Residues 81-99 (ICYDALDPAKYAKWKPWLK) are Cytoplasmic-facing. A helical transmembrane segment spans residues 100-123 (PYLAVCIFFNVILFLVALCCFLLR). The Lumenal segment spans residues 124 to 264 (GSLESTLAYG…LNYYSSLMNS (141 aa)). Residue Asn229 is glycosylated (N-linked (GlcNAc...) asparagine). Residues 265–290 (MGVVTLLVWLFEVSITAGLRYLHTAL) form a helical membrane-spanning segment. Over 291–346 (ESVSNPEDPECESEGWLLEKSVPETWKAFLESFKKLGKSNQVEAEGADAGPAPEAG) the chain is Cytoplasmic. Residues 341–346 (PAPEAG) form an interaction with MREG region.

This sequence belongs to the PRPH2/ROM1 family. In terms of assembly, homodimer; disulfide-linked. Forms a homotetramer. Forms a heterotetramer with ROM1. Homotetramer and heterotetramer core complexes go on to form higher order complexes by formation of intermolecular disulfide bonds. Interacts with MREG. Interacts with STX3 isoform 3B. Interacts with SNAP25. In terms of tissue distribution, expressed in the retina (at protein level).

It localises to the membrane. It is found in the cell projection. The protein localises to the cilium. Its subcellular location is the photoreceptor outer segment. The protein resides in the photoreceptor inner segment. Functionally, essential for retina photoreceptor outer segment disk morphogenesis, may also play a role with ROM1 in the maintenance of outer segment disk structure. Required for the maintenance of retinal outer nuclear layer thickness. Required for the correct development and organization of the photoreceptor inner segment. The protein is Peripherin-2 (Prph2) of Mus musculus (Mouse).